Here is a 450-residue protein sequence, read N- to C-terminus: Probable rhamnogalacturonase E (450 aa).

Positions 1–22 are cleaved as a signal peptide; that stretch reads MTWSTSFLSVHFFAFITTSIHA. Cys-43 and Cys-69 form a disulfide bridge. N-linked (GlcNAc...) asparagine glycans are attached at residues Asn-54, Asn-92, and Asn-131. Asp-222 (proton donor) is an active-site residue. An intrachain disulfide couples Cys-224 to Cys-241. Asn-242 and Asn-257 each carry an N-linked (GlcNAc...) asparagine glycan. His-297 is an active-site residue. 2 N-linked (GlcNAc...) asparagine glycosylation sites follow: Asn-324 and Asn-329. 2 cysteine pairs are disulfide-bonded: Cys-347-Cys-353 and Cys-375-Cys-384.

This sequence belongs to the glycosyl hydrolase 28 family.

The protein resides in the secreted. Pectinolytic enzymes consist of four classes of enzymes: pectine lyase, polygalacturonase, pectin methylesterase and rhamnogalacturonase. Hydrolyzes alpha-D-galacturonopyranosyl-(1,2)-alpha-L-rhamnopyranosyl linkages in the backbone of the hairy regions of pectins. The protein is Probable rhamnogalacturonase E (rhgE) of Aspergillus niger.